Reading from the N-terminus, the 921-residue chain is Isoleucine--tRNA ligase (921 aa).

Positions 57–67 match the 'HIGH' region motif; the sequence is PYANGDIHMGH. Residue E552 coordinates L-isoleucyl-5'-AMP. The short motif at 593-597 is the 'KMSKS' region element; that stretch reads KMSKS. K596 is a binding site for ATP. Zn(2+)-binding residues include C888, C891, C908, and C911.

The protein belongs to the class-I aminoacyl-tRNA synthetase family. IleS type 1 subfamily. In terms of assembly, monomer. Zn(2+) is required as a cofactor.

The protein localises to the cytoplasm. The catalysed reaction is tRNA(Ile) + L-isoleucine + ATP = L-isoleucyl-tRNA(Ile) + AMP + diphosphate. In terms of biological role, catalyzes the attachment of isoleucine to tRNA(Ile). As IleRS can inadvertently accommodate and process structurally similar amino acids such as valine, to avoid such errors it has two additional distinct tRNA(Ile)-dependent editing activities. One activity is designated as 'pretransfer' editing and involves the hydrolysis of activated Val-AMP. The other activity is designated 'posttransfer' editing and involves deacylation of mischarged Val-tRNA(Ile). This chain is Isoleucine--tRNA ligase, found in Bacillus cereus (strain G9842).